The chain runs to 340 residues: Lipoyl synthase (340 aa).

[4Fe-4S] cluster contacts are provided by Cys83, Cys88, Cys94, Cys109, Cys113, Cys116, and Ser323. The 218-residue stretch at 95-312 (FSGGTATFMI…AEEGYKMGFK (218 aa)) folds into the Radical SAM core domain.

This sequence belongs to the radical SAM superfamily. Lipoyl synthase family. [4Fe-4S] cluster is required as a cofactor.

The protein resides in the cytoplasm. It carries out the reaction [[Fe-S] cluster scaffold protein carrying a second [4Fe-4S](2+) cluster] + N(6)-octanoyl-L-lysyl-[protein] + 2 oxidized [2Fe-2S]-[ferredoxin] + 2 S-adenosyl-L-methionine + 4 H(+) = [[Fe-S] cluster scaffold protein] + N(6)-[(R)-dihydrolipoyl]-L-lysyl-[protein] + 4 Fe(3+) + 2 hydrogen sulfide + 2 5'-deoxyadenosine + 2 L-methionine + 2 reduced [2Fe-2S]-[ferredoxin]. It functions in the pathway protein modification; protein lipoylation via endogenous pathway; protein N(6)-(lipoyl)lysine from octanoyl-[acyl-carrier-protein]: step 2/2. Functionally, catalyzes the radical-mediated insertion of two sulfur atoms into the C-6 and C-8 positions of the octanoyl moiety bound to the lipoyl domains of lipoate-dependent enzymes, thereby converting the octanoylated domains into lipoylated derivatives. This chain is Lipoyl synthase, found in Pseudomonas fluorescens (strain Pf0-1).